The chain runs to 427 residues: 2-oxoglutarate and iron-dependent oxygenase JMJD4 (427 aa).

The region spanning 147 to 306 (SLVNDLEDIF…NMWHFLQQEL (160 aa)) is the JmjC domain. H194, D196, and H274 together coordinate Fe cation.

The protein belongs to the JMJD6 family. In terms of assembly, interacts with ETF1. Interacts with the ETF1-GSPT1 complex. Fe(2+) is required as a cofactor.

The protein localises to the cytoplasm. The catalysed reaction is L-lysyl-[protein] + 2-oxoglutarate + O2 = 4-hydroxy-L-lysyl-[protein] + succinate + CO2. Functionally, catalyzes the 2-oxoglutarate and iron-dependent C4-lysyl hydroxylation of ETF1 at 'Lys-63' thereby promoting the translational termination efficiency of ETF1. Not essential for embryonic stem cell (ESC) maintenance and the embryonic and postnatal development. In Mus musculus (Mouse), this protein is 2-oxoglutarate and iron-dependent oxygenase JMJD4 (Jmjd4).